The chain runs to 469 residues: tRNA modification GTPase MnmE (469 aa).

(6S)-5-formyl-5,6,7,8-tetrahydrofolate is bound by residues Arg26, Glu88, and Arg127. The region spanning 222 to 390 (GLKVAIVGRP…LEDAILHLVQ (169 aa)) is the TrmE-type G domain. Asn232 serves as a coordination point for K(+). Residues 232-237 (NVGKSS), 251-257 (TDLPGTT), 276-279 (DTAG), and 344-347 (NKAD) contribute to the GTP site. A Mg(2+)-binding site is contributed by Ser236. 3 residues coordinate K(+): Thr251, Leu253, and Thr256. Thr257 lines the Mg(2+) pocket. Lys469 serves as a coordination point for (6S)-5-formyl-5,6,7,8-tetrahydrofolate.

This sequence belongs to the TRAFAC class TrmE-Era-EngA-EngB-Septin-like GTPase superfamily. TrmE GTPase family. Homodimer. Heterotetramer of two MnmE and two MnmG subunits. K(+) is required as a cofactor.

It localises to the cytoplasm. Functionally, exhibits a very high intrinsic GTPase hydrolysis rate. Involved in the addition of a carboxymethylaminomethyl (cmnm) group at the wobble position (U34) of certain tRNAs, forming tRNA-cmnm(5)s(2)U34. The polypeptide is tRNA modification GTPase MnmE (Synechococcus elongatus).